Reading from the N-terminus, the 354-residue chain is Arginase-2, mitochondrial (354 aa).

Residues 1 to 22 constitute a mitochondrion transit peptide; that stretch reads MSYGSCVSRLLRTRVQSVLKKS. The Mn(2+) site is built by His-120, Asp-143, His-145, and Asp-147. Substrate contacts are provided by residues 145 to 149, 156 to 158, and Asp-202; these read HADIN and SGN. Asp-251 and Asp-253 together coordinate Mn(2+). Substrate-binding residues include Thr-265 and Glu-296. The disordered stretch occupies residues 330-354; it reads GHTVYEQLPPPSSPHESENAERVRI. Over residues 344 to 354 the composition is skewed to basic and acidic residues; the sequence is HESENAERVRI.

This sequence belongs to the arginase family. In terms of assembly, homotrimer. The cofactor is Mn(2+).

It is found in the mitochondrion. The enzyme catalyses L-arginine + H2O = urea + L-ornithine. It functions in the pathway nitrogen metabolism; urea cycle; L-ornithine and urea from L-arginine: step 1/1. Its function is as follows. May play a role in the regulation of extra-urea cycle arginine metabolism and also in down-regulation of nitric oxide synthesis. Extrahepatic arginase functions to regulate L-arginine bioavailability to nitric oxid synthase (NOS). Arginine metabolism is a critical regulator of innate and adaptive immune responses. Seems to be involved in negative regulation of the survival capacity of activated T cells. May suppress inflammation-related signaling in asthmatic airway epithelium. May play a role in promoting prenatal immune suppression. Regulates RPS6KB1 signaling, which promotes endothelial cell senescence and inflammation and implicates NOS3/eNOS dysfunction. Can inhibit endothelial autophagy independently of its enzymatic activity implicating mTORC2 signaling. Involved in vascular smooth muscle cell senescence and apoptosis independently of its enzymatic activity. This Oryctolagus cuniculus (Rabbit) protein is Arginase-2, mitochondrial (ARG2).